We begin with the raw amino-acid sequence, 454 residues long: Tumor necrosis factor receptor superfamily member 1A (454 aa).

The signal sequence occupies residues 1-29 (MGLPTVPGLLLSLVLLALLMGIHPSGVTG). The Extracellular portion of the chain corresponds to 30–212 (LVPSLGDREK…VTNPQDSGTA (183 aa)). 4 TNFR-Cys repeats span residues 43–82 (LCPQGKYVHSKNNSICCTKCHKGTYLVSDCPSPGRDTVCR), 83–125 (ECEK…DTVC), 126–166 (GCKE…NTVC), and 167–196 (NCHAGFFLRESECVPCSHCKKNEECMKLCL). 12 disulfide bridges follow: C44/C58, C59/C72, C62/C81, C84/C99, C102/C117, C105/C125, C127/C143, C146/C158, C149/C166, C168/C179, C182/C195, and C185/C191. N54 carries N-linked (GlcNAc...) asparagine glycosylation. N-linked (GlcNAc...) asparagine glycosylation is present at N151. Residue N202 is glycosylated (N-linked (GlcNAc...) asparagine). A helical transmembrane segment spans residues 213-235 (VLLPLVILLGLCLLSFIFISLMC). Topologically, residues 236–454 (RYPRWRPEVY…APSSTTRLPR (219 aa)) are cytoplasmic. Positions 339–349 (VQKWEDSAHPQ) are N-SMase activation domain (NSD). A Death domain is found at 356-441 (LAILYAVVDG…GCLENILEAL (86 aa)). (Microbial infection) N-beta-linked (GlcNAc) arginine glycosylation occurs at R376.

Binding of TNF to the extracellular domain leads to homotrimerization. The aggregated death domains provide a novel molecular interface that interacts specifically with the death domain of TRADD. Various TRADD-interacting proteins such as TRAFS, RIPK1 and possibly FADD, are recruited to the complex by their association with TRADD. This complex activates at least two distinct signaling cascades, apoptosis and NF-kappa-B signaling. Interacts with BAG4, BABAM2, FEM1B, GRB2, SQSTM1 and TRPC4AP. Interacts with DAB2IP. Interacts directly with NOL3 (via CARD domain); inhibits TNF-signaling pathway. Interacts with SH3RF2, TRADD and RIPK1. SH3RF2 facilitates the recruitment of RIPK1 and TRADD to TNFRSF1A in a TNF-alpha-dependent process. Interacts with PGLYRP1; this interaction is important for cell death induction. Interacts (via death domain) with MADD (via death domain). In terms of processing, (Microbial infection) Glycosylated at Arg-376 by S.typhimurium protein Ssek3: arginine GlcNAcylation prevents homotypic/heterotypic death domain interactions.

It localises to the cell membrane. It is found in the golgi apparatus membrane. Its function is as follows. Receptor for TNFSF2/TNF-alpha and homotrimeric TNFSF1/lymphotoxin-alpha. The adapter molecule FADD recruits caspase-8 to the activated receptor. The resulting death-inducing signaling complex (DISC) performs caspase-8 proteolytic activation which initiates the subsequent cascade of caspases (aspartate-specific cysteine proteases) mediating apoptosis. This Mus musculus (Mouse) protein is Tumor necrosis factor receptor superfamily member 1A (Tnfrsf1a).